The following is a 230-amino-acid chain: MSEIKDIVVQGLWKNNSALVQLLGLCPLLAVTSTATNALGLGLATTLVLTLTNLTVSALRRWTPAEIRIPIYVMIIASVVSAVQMLINAYAFGLYQSLGIFIPLIVTNCIVVGRAEAFAAKKGPWLSALDGFSIGMGATGAMFVLGSLREILGNGTLFDGADSLLGSWAKVLRVEIFHTDSPFLLAMLPPGAFIGLGLMLAVKYLIDEKMKKRRAVTAPSAVPAGETGKV.

6 helical membrane-spanning segments follow: residues 18 to 38 (ALVQ…ATNA), 39 to 59 (LGLG…VSAL), 63 to 83 (TPAE…VSAV), 86 to 106 (LINA…PLIV), 125 to 145 (WLSA…MFVL), and 182 to 202 (PFLL…MLAV).

Belongs to the NqrDE/RnfAE family. In terms of assembly, the complex is composed of six subunits: RsxA, RsxB, RsxC, RsxD, RsxE and RsxG.

It localises to the cell inner membrane. In terms of biological role, part of a membrane-bound complex that couples electron transfer with translocation of ions across the membrane. Required to maintain the reduced state of SoxR. The chain is Ion-translocating oxidoreductase complex subunit E from Salmonella arizonae (strain ATCC BAA-731 / CDC346-86 / RSK2980).